The chain runs to 1355 residues: Patatin-like phospholipase domain-containing protein 6 (1355 aa).

Topologically, residues 1-43 (MGTPSHELNTTSSGAEVIQKTLEEGLGRRICVAQPVPFVPQVL) are lumenal. Asparagine 9 carries an N-linked (GlcNAc...) asparagine glycan. Residues 44 to 64 (GVMIGAGVAVLVTAVLILLVV) traverse the membrane as a helical segment. The Cytoplasmic segment spans residues 65 to 1355 (RRLRVQKTPA…QETPSSVADA (1291 aa)). Position 179-306 (179-306 (VLGHFEKPLF…VRVVQIIMVR (128 aa))) interacts with a nucleoside 3',5'-cyclic phosphate. Serine 338 carries the post-translational modification Phosphoserine. The tract at residues 338-395 (SPGLPTRTSPVRGSKRVVSTSGTEDTSKETSGRPLDSIGAPLPGPAGDPVKPTSLEAP) is disordered. A compositionally biased stretch (polar residues) spans 343–361 (TRTSPVRGSKRVVSTSGTE). Position 345 is a phosphothreonine (threonine 345). Phosphoserine is present on residues serine 346, serine 356, and serine 405. A nucleoside 3',5'-cyclic phosphate contacts are provided by residues 492 to 614 (ELAK…VAAR) and 610 to 730 (TVAA…LSQK). The region spanning 961 to 1127 (LVLGGGGARG…INNLPADIAR (167 aa)) is the PNPLA domain. Residues 965-970 (GGGARG) carry the GXGXXG motif. The short motif at 992–996 (GTSIG) is the GXSXG element. Catalysis depends on serine 994, which acts as the Nucleophile. Aspartate 1114 serves as the catalytic Proton acceptor. A DGA/G motif is present at residues 1114 to 1116 (DGG). The interval 1286 to 1355 (SYVSDGCADG…QETPSSVADA (70 aa)) is disordered. Over residues 1293–1309 (ADGEESDCLTEYEEDAG) the composition is skewed to acidic residues.

This sequence belongs to the NTE family. In terms of processing, glycosylated. As to expression, expressed in brain, testes and kidney (at protein level). Expressed ubiquitously in brain of young mice. Reaching adulthood, there is a most prominent expression in Purkinje cells, granule cells and pyramidal neurons of the hippocampus and some large neurons in the medulla oblongata, nucleus dentatus and pons.

The protein localises to the endoplasmic reticulum membrane. The catalysed reaction is a 1-acyl-sn-glycero-3-phosphocholine + H2O = sn-glycerol 3-phosphocholine + a fatty acid + H(+). It carries out the reaction 1-hexadecanoyl-sn-glycero-3-phosphocholine + H2O = sn-glycerol 3-phosphocholine + hexadecanoate + H(+). The enzyme catalyses 1-hexadecanoyl-sn-glycero-3-phosphate + H2O = sn-glycerol 3-phosphate + hexadecanoate + H(+). It catalyses the reaction 1-(9Z-octadecenoyl)-sn-glycero-3-phosphocholine + H2O = sn-glycerol 3-phosphocholine + (9Z)-octadecenoate + H(+). The catalysed reaction is 1-hexadecanoylglycerol + H2O = glycerol + hexadecanoate + H(+). It carries out the reaction 2-hexadecanoylglycerol + H2O = glycerol + hexadecanoate + H(+). The enzyme catalyses 1-(9Z-octadecenoyl)-glycerol + H2O = glycerol + (9Z)-octadecenoate + H(+). It catalyses the reaction 2-(9Z-octadecenoyl)-glycerol + H2O = glycerol + (9Z)-octadecenoate + H(+). The catalysed reaction is 2-(5Z,8Z,11Z,14Z-eicosatetraenoyl)-glycerol + H2O = glycerol + (5Z,8Z,11Z,14Z)-eicosatetraenoate + H(+). Inhibited by a series a OPs such as mipafox (MPX), phenyl saligenin phosphate (PSP), phenyl dipentyl phosphinate (PDPP), diisopropyl fluorophosphate and paraoxon. Phospholipase B that deacylates intracellular phosphatidylcholine (PtdCho), generating glycerophosphocholine (GroPtdCho). This deacylation occurs at both sn-2 and sn-1 positions of PtdCho. Catalyzes the hydrolysis of several naturally occurring membrane-associated lipids. Hydrolyzes lysophospholipids and monoacylglycerols, preferring the 1-acyl to the 2-acyl isomer. Does not catalyze hydrolysis of di- or triacylglycerols or fatty acid amides. The protein is Patatin-like phospholipase domain-containing protein 6 (Pnpla6) of Mus musculus (Mouse).